The primary structure comprises 356 residues: UDP-N-acetylglucosamine--N-acetylmuramyl-(pentapeptide) pyrophosphoryl-undecaprenol N-acetylglucosamine transferase (356 aa).

UDP-N-acetyl-alpha-D-glucosamine contacts are provided by residues 11 to 13 (TAG), Asn-123, Arg-159, and Ser-192.

This sequence belongs to the glycosyltransferase 28 family. MurG subfamily.

Its subcellular location is the cell membrane. It carries out the reaction di-trans,octa-cis-undecaprenyl diphospho-N-acetyl-alpha-D-muramoyl-L-alanyl-D-glutamyl-meso-2,6-diaminopimeloyl-D-alanyl-D-alanine + UDP-N-acetyl-alpha-D-glucosamine = di-trans,octa-cis-undecaprenyl diphospho-[N-acetyl-alpha-D-glucosaminyl-(1-&gt;4)]-N-acetyl-alpha-D-muramoyl-L-alanyl-D-glutamyl-meso-2,6-diaminopimeloyl-D-alanyl-D-alanine + UDP + H(+). The protein operates within cell wall biogenesis; peptidoglycan biosynthesis. Its function is as follows. Cell wall formation. Catalyzes the transfer of a GlcNAc subunit on undecaprenyl-pyrophosphoryl-MurNAc-pentapeptide (lipid intermediate I) to form undecaprenyl-pyrophosphoryl-MurNAc-(pentapeptide)GlcNAc (lipid intermediate II). This Tropheryma whipplei (strain Twist) (Whipple's bacillus) protein is UDP-N-acetylglucosamine--N-acetylmuramyl-(pentapeptide) pyrophosphoryl-undecaprenol N-acetylglucosamine transferase.